Reading from the N-terminus, the 310-residue chain is Probable cobalamin biosynthesis protein CobD (310 aa).

Transmembrane regions (helical) follow at residues 53–73 (LVFG…IFFT), 80–100 (LISN…FSIG), 157–177 (DSII…AFIY), 215–235 (IAGI…VPAI), and 289–309 (AVDY…FNLI).

Belongs to the CobD/CbiB family.

Its subcellular location is the cell membrane. It functions in the pathway cofactor biosynthesis; adenosylcobalamin biosynthesis. Its function is as follows. Converts cobyric acid to cobinamide by the addition of aminopropanol on the F carboxylic group. This is Probable cobalamin biosynthesis protein CobD from Methanococcus vannielii (strain ATCC 35089 / DSM 1224 / JCM 13029 / OCM 148 / SB).